The primary structure comprises 492 residues: 2-succinylbenzoate--CoA ligase (492 aa).

Belongs to the ATP-dependent AMP-binding enzyme family. MenE subfamily.

It carries out the reaction 2-succinylbenzoate + ATP + CoA = 2-succinylbenzoyl-CoA + AMP + diphosphate. It functions in the pathway quinol/quinone metabolism; 1,4-dihydroxy-2-naphthoate biosynthesis; 1,4-dihydroxy-2-naphthoate from chorismate: step 5/7. Its pathway is quinol/quinone metabolism; menaquinone biosynthesis. Converts 2-succinylbenzoate (OSB) to 2-succinylbenzoyl-CoA (OSB-CoA). The sequence is that of 2-succinylbenzoate--CoA ligase from Staphylococcus aureus (strain bovine RF122 / ET3-1).